A 162-amino-acid chain; its full sequence is Phospholipase A2 (162 aa).

Residues 1-22 (MKVLQMFFCVILLCVTSVLVEA) form the signal peptide. A propeptide spanning residues 23–35 (KSTTKGDETASKR) is cleaved from the precursor. 6 disulfide bridges follow: Cys-60-Cys-155, Cys-62-Cys-78, Cys-77-Cys-134, Cys-84-Cys-127, Cys-94-Cys-120, and Cys-113-Cys-125. The Ca(2+) site is built by Tyr-61, Gly-63, and Gly-65. His-81 is a catalytic residue. Ca(2+) is bound at residue Asp-82. Asp-128 is an active-site residue.

This sequence belongs to the phospholipase A2 family. Group I subfamily. D49 sub-subfamily. The cofactor is Ca(2+). In terms of tissue distribution, expressed both outside and in acontia, a specialised envenomation structure laden with batteries of venom-containing nematocysts found only in the superfamily Metridioidea.

It is found in the secreted. It localises to the nematocyst. It catalyses the reaction a 1,2-diacyl-sn-glycero-3-phosphocholine + H2O = a 1-acyl-sn-glycero-3-phosphocholine + a fatty acid + H(+). Functionally, PLA2 catalyzes the calcium-dependent hydrolysis of the 2-acyl groups in 3-sn-phosphoglycerides. This Calliactis polypus (Hermit crab anemone) protein is Phospholipase A2.